The sequence spans 382 residues: S-adenosylmethionine synthase (382 aa).

His-15 provides a ligand contact to ATP. Asp-17 serves as a coordination point for Mg(2+). Residue Glu-43 coordinates K(+). L-methionine-binding residues include Glu-56 and Gln-99. A flexible loop region spans residues 99-109; the sequence is QSGDIAQGVDR. Residues 164–166, 230–231, Asp-239, 245–246, Ala-262, and Lys-266 each bind ATP; these read DAK, KF, and RK. Residue Asp-239 participates in L-methionine binding. Lys-270 is an L-methionine binding site.

It belongs to the AdoMet synthase family. As to quaternary structure, homotetramer; dimer of dimers. It depends on Mg(2+) as a cofactor. Requires K(+) as cofactor.

The protein resides in the cytoplasm. It carries out the reaction L-methionine + ATP + H2O = S-adenosyl-L-methionine + phosphate + diphosphate. The protein operates within amino-acid biosynthesis; S-adenosyl-L-methionine biosynthesis; S-adenosyl-L-methionine from L-methionine: step 1/1. Catalyzes the formation of S-adenosylmethionine (AdoMet) from methionine and ATP. The overall synthetic reaction is composed of two sequential steps, AdoMet formation and the subsequent tripolyphosphate hydrolysis which occurs prior to release of AdoMet from the enzyme. The chain is S-adenosylmethionine synthase from Dichelobacter nodosus (strain VCS1703A).